The following is a 389-amino-acid chain: GTPase Obg (389 aa).

One can recognise an Obg domain in the interval 1-159; the sequence is MKFVDEAVIK…RELRLELLLL (159 aa). An OBG-type G domain is found at 160-333; that stretch reads ADVGLLGMPN…LAEKLFDFIK (174 aa). Residues 166-173, 191-195, 213-216, 283-286, and 314-316 each bind GTP; these read GMPNAGKS, FTTLV, DIPG, NKTD, and SAA. The Mg(2+) site is built by serine 173 and threonine 193.

This sequence belongs to the TRAFAC class OBG-HflX-like GTPase superfamily. OBG GTPase family. Monomer. Mg(2+) serves as cofactor.

It localises to the cytoplasm. Its function is as follows. An essential GTPase which binds GTP, GDP and possibly (p)ppGpp with moderate affinity, with high nucleotide exchange rates and a fairly low GTP hydrolysis rate. Plays a role in control of the cell cycle, stress response, ribosome biogenesis and in those bacteria that undergo differentiation, in morphogenesis control. The polypeptide is GTPase Obg (Shewanella amazonensis (strain ATCC BAA-1098 / SB2B)).